A 416-amino-acid polypeptide reads, in one-letter code: Transmembrane protease serine 11B-like protein (416 aa).

Over 1–15 the chain is Cytoplasmic; sequence MYRPVIASRKSIPPW. The helical; Signal-anchor for type II membrane protein transmembrane segment at 16-36 threads the bilayer; it reads LIILCVLGVLAALGIIIGLLV. The Extracellular segment spans residues 37–416; that stretch reads HFLAVENKIY…RNWIASKTGI (380 aa). Residues 44 to 161 form the SEA domain; that stretch reads KIYYYQGGFK…GSLKLTEISK (118 aa). Asparagine 107 carries an N-linked (GlcNAc...) asparagine glycan. The Peptidase S1 domain maps to 185–415; that stretch reads ITGGSTAHKG…YRNWIASKTG (231 aa). A disulfide bond links cysteine 210 and cysteine 226. The Charge relay system role is filled by histidine 225. The N-linked (GlcNAc...) asparagine glycan is linked to asparagine 235. Aspartate 270 functions as the Charge relay system in the catalytic mechanism. Intrachain disulfides connect cysteine 335/cysteine 351 and cysteine 362/cysteine 391. The active-site Charge relay system is serine 366.

It belongs to the peptidase S1 family. Expressed in esophagus, cervix, tongue, and testes.

The protein localises to the cell membrane. Inhibited by aprotinin, leupeptin, benzamidine, SERPINA1, SPINT1 and SPINT2. Its function is as follows. Serine protease. The chain is Transmembrane protease serine 11B-like protein (Tmprss11b) from Mus musculus (Mouse).